A 501-amino-acid chain; its full sequence is ATP synthase subunit alpha (501 aa).

169 to 176 (GDRQTGKT) contacts ATP.

It belongs to the ATPase alpha/beta chains family. In terms of assembly, F-type ATPases have 2 components, CF(1) - the catalytic core - and CF(0) - the membrane proton channel. CF(1) has five subunits: alpha(3), beta(3), gamma(1), delta(1), epsilon(1). CF(0) has three main subunits: a(1), b(2) and c(9-12). The alpha and beta chains form an alternating ring which encloses part of the gamma chain. CF(1) is attached to CF(0) by a central stalk formed by the gamma and epsilon chains, while a peripheral stalk is formed by the delta and b chains.

Its subcellular location is the cell membrane. It carries out the reaction ATP + H2O + 4 H(+)(in) = ADP + phosphate + 5 H(+)(out). In terms of biological role, produces ATP from ADP in the presence of a proton gradient across the membrane. The alpha chain is a regulatory subunit. The sequence is that of ATP synthase subunit alpha from Streptococcus equi subsp. zooepidemicus (strain H70).